Here is a 118-residue protein sequence, read N- to C-terminus: MRAKDAIGAYGERVAGRWLEAEGLEVVERNWRCPDGELDLVARDGETLVFVEVKTRSSLAFGHPGEAVTRLKLARLRRLAARWLAEHDAHAREVRIDVVAVLRTRAGAARVEHLRGVG.

The protein belongs to the UPF0102 family.

The protein is UPF0102 protein Bcav_2532 of Beutenbergia cavernae (strain ATCC BAA-8 / DSM 12333 / CCUG 43141 / JCM 11478 / NBRC 16432 / NCIMB 13614 / HKI 0122).